Consider the following 341-residue polypeptide: Protein MENT (341 aa).

The N-terminal stretch at 1–23 (MVPAAGALLWVLLLNLGPRAAGA) is a signal peptide. A disordered region spans residues 115-196 (AGKDSTSREL…SPSPTAMPSP (82 aa)). Positions 127–155 (ATPNTAGSSSTRFIANSQEPEIRLTSSLP) are enriched in polar residues.

Phosphorylation sites are present in the extracellular medium. As to expression, plasma. Overexpressed in lymphomas.

It is found in the secreted. Functionally, involved in control of cellular proliferation. Onconcogenic modifier contributing to the tumor suppressor function of DNMT3B. The chain is Protein MENT (MENT) from Homo sapiens (Human).